The following is a 209-amino-acid chain: N-(5'-phosphoribosyl)anthranilate isomerase (209 aa).

It belongs to the TrpF family.

The catalysed reaction is N-(5-phospho-beta-D-ribosyl)anthranilate = 1-(2-carboxyphenylamino)-1-deoxy-D-ribulose 5-phosphate. The protein operates within amino-acid biosynthesis; L-tryptophan biosynthesis; L-tryptophan from chorismate: step 3/5. This chain is N-(5'-phosphoribosyl)anthranilate isomerase, found in Staphylococcus carnosus (strain TM300).